Consider the following 342-residue polypeptide: Trans-3-hydroxy-L-proline dehydratase (342 aa).

The Proton acceptor role is filled by Ser-90. Substrate is bound by residues 91–92 (GS), Asp-251, and 256–257 (GT).

Belongs to the proline racemase family.

The enzyme catalyses trans-3-hydroxy-L-proline = 1-pyrroline-2-carboxylate + H2O. Its function is as follows. Catalyzes the dehydration of trans-3-hydroxy-L-proline (t3LHyp) to Delta(1)-pyrroline-2-carboxylate (Pyr2C). Displays neither proline racemase activity nor 4-hydroxyproline 2-epimerase activity. The protein is Trans-3-hydroxy-L-proline dehydratase of Brucella suis biovar 1 (strain 1330).